The sequence spans 225 residues: PKHD-type hydroxylase KPK_3192 (225 aa).

In terms of domain architecture, Fe2OG dioxygenase spans 78-177; the sequence is TISAPLFNRY…RQASFLWIQS (100 aa). Fe cation-binding residues include His96, Asp98, and His158. Arg168 serves as a coordination point for 2-oxoglutarate.

Fe(2+) serves as cofactor. It depends on L-ascorbate as a cofactor.

The polypeptide is PKHD-type hydroxylase KPK_3192 (Klebsiella pneumoniae (strain 342)).